A 195-amino-acid polypeptide reads, in one-letter code: Protease (195 aa).

A Peptidase A2 domain is found at 71–149 (ALMLVDTGAE…DKWQILGRDV (79 aa)). Asp-76 is an active-site residue.

This Bos taurus (Bovine) protein is Protease.